The chain runs to 151 residues: D-aminoacyl-tRNA deacylase (151 aa).

The short motif at G138 to P139 is the Gly-cisPro motif, important for rejection of L-amino acids element.

The protein belongs to the DTD family. In terms of assembly, homodimer.

The protein localises to the cytoplasm. It carries out the reaction glycyl-tRNA(Ala) + H2O = tRNA(Ala) + glycine + H(+). The enzyme catalyses a D-aminoacyl-tRNA + H2O = a tRNA + a D-alpha-amino acid + H(+). Its function is as follows. An aminoacyl-tRNA editing enzyme that deacylates mischarged D-aminoacyl-tRNAs. Also deacylates mischarged glycyl-tRNA(Ala), protecting cells against glycine mischarging by AlaRS. Acts via tRNA-based rather than protein-based catalysis; rejects L-amino acids rather than detecting D-amino acids in the active site. By recycling D-aminoacyl-tRNA to D-amino acids and free tRNA molecules, this enzyme counteracts the toxicity associated with the formation of D-aminoacyl-tRNA entities in vivo and helps enforce protein L-homochirality. The sequence is that of D-aminoacyl-tRNA deacylase from Magnetococcus marinus (strain ATCC BAA-1437 / JCM 17883 / MC-1).